We begin with the raw amino-acid sequence, 488 residues long: Glutamate--tRNA ligase (488 aa).

The short motif at 12–22 (PSPTGYMHVGN) is the 'HIGH' region element. Positions 109, 111, 136, and 138 each coordinate Zn(2+). Residues 253–257 (KLSKR) carry the 'KMSKS' region motif. Residue Lys256 coordinates ATP.

It belongs to the class-I aminoacyl-tRNA synthetase family. Glutamate--tRNA ligase type 1 subfamily. Monomer. The cofactor is Zn(2+).

Its subcellular location is the cytoplasm. The enzyme catalyses tRNA(Glu) + L-glutamate + ATP = L-glutamyl-tRNA(Glu) + AMP + diphosphate. In terms of biological role, catalyzes the attachment of glutamate to tRNA(Glu) in a two-step reaction: glutamate is first activated by ATP to form Glu-AMP and then transferred to the acceptor end of tRNA(Glu). The protein is Glutamate--tRNA ligase of Clostridium tetani (strain Massachusetts / E88).